Reading from the N-terminus, the 388-residue chain is Carbamoyl phosphate synthase small chain (388 aa).

The interval 1-192 (MPLSDAMPAL…FNPDGTVKNG (192 aa)) is CPSase. L-glutamine is bound by residues Ser-51, Gly-244, and Gly-246. The 187-residue stretch at 196-382 (TVVALDFGVK…VHQMRTTKQA (187 aa)) folds into the Glutamine amidotransferase type-1 domain. Cys-272 acts as the Nucleophile in catalysis. 4 residues coordinate L-glutamine: Met-273, Gln-276, Asn-312, and Phe-315. Residues His-355 and Glu-357 contribute to the active site.

The protein belongs to the CarA family. Composed of two chains; the small (or glutamine) chain promotes the hydrolysis of glutamine to ammonia, which is used by the large (or ammonia) chain to synthesize carbamoyl phosphate. Tetramer of heterodimers (alpha,beta)4.

The enzyme catalyses hydrogencarbonate + L-glutamine + 2 ATP + H2O = carbamoyl phosphate + L-glutamate + 2 ADP + phosphate + 2 H(+). The catalysed reaction is L-glutamine + H2O = L-glutamate + NH4(+). It functions in the pathway amino-acid biosynthesis; L-arginine biosynthesis; carbamoyl phosphate from bicarbonate: step 1/1. Its pathway is pyrimidine metabolism; UMP biosynthesis via de novo pathway; (S)-dihydroorotate from bicarbonate: step 1/3. In terms of biological role, small subunit of the glutamine-dependent carbamoyl phosphate synthetase (CPSase). CPSase catalyzes the formation of carbamoyl phosphate from the ammonia moiety of glutamine, carbonate, and phosphate donated by ATP, constituting the first step of 2 biosynthetic pathways, one leading to arginine and/or urea and the other to pyrimidine nucleotides. The small subunit (glutamine amidotransferase) binds and cleaves glutamine to supply the large subunit with the substrate ammonia. In Nostoc sp. (strain PCC 7120 / SAG 25.82 / UTEX 2576), this protein is Carbamoyl phosphate synthase small chain.